Consider the following 673-residue polypeptide: DNA ligase (673 aa).

NAD(+) is bound by residues 32–36, 81–82, and glutamate 113; these read DAEYD and SL. Catalysis depends on lysine 115, which acts as the N6-AMP-lysine intermediate. NAD(+)-binding residues include arginine 136, glutamate 173, lysine 290, and lysine 314. Residues cysteine 408, cysteine 411, cysteine 426, and cysteine 432 each coordinate Zn(2+). The 79-residue stretch at 595–673 folds into the BRCT domain; sequence EIDSPFAGKT…EAEMIRLLGA (79 aa).

This sequence belongs to the NAD-dependent DNA ligase family. LigA subfamily. Requires Mg(2+) as cofactor. Mn(2+) serves as cofactor.

It carries out the reaction NAD(+) + (deoxyribonucleotide)n-3'-hydroxyl + 5'-phospho-(deoxyribonucleotide)m = (deoxyribonucleotide)n+m + AMP + beta-nicotinamide D-nucleotide.. Functionally, DNA ligase that catalyzes the formation of phosphodiester linkages between 5'-phosphoryl and 3'-hydroxyl groups in double-stranded DNA using NAD as a coenzyme and as the energy source for the reaction. It is essential for DNA replication and repair of damaged DNA. This chain is DNA ligase, found in Serratia proteamaculans (strain 568).